The primary structure comprises 599 residues: Aspartate--tRNA(Asp/Asn) ligase (599 aa).

Position 174 (glutamate 174) interacts with L-aspartate. Residues 198 to 201 form an aspartate region; the sequence is QLFK. Arginine 220 lines the L-aspartate pocket. Residues 220 to 222 and glutamine 229 each bind ATP; that span reads RDE. Residue histidine 457 participates in L-aspartate binding. Glutamate 491 is an ATP binding site. Arginine 498 contacts L-aspartate. 543–546 contributes to the ATP binding site; the sequence is GLDR.

It belongs to the class-II aminoacyl-tRNA synthetase family. Type 1 subfamily. Homodimer.

Its subcellular location is the cytoplasm. The enzyme catalyses tRNA(Asx) + L-aspartate + ATP = L-aspartyl-tRNA(Asx) + AMP + diphosphate. Aspartyl-tRNA synthetase with relaxed tRNA specificity since it is able to aspartylate not only its cognate tRNA(Asp) but also tRNA(Asn). Reaction proceeds in two steps: L-aspartate is first activated by ATP to form Asp-AMP and then transferred to the acceptor end of tRNA(Asp/Asn). The polypeptide is Aspartate--tRNA(Asp/Asn) ligase (Paraburkholderia phytofirmans (strain DSM 17436 / LMG 22146 / PsJN) (Burkholderia phytofirmans)).